Here is a 199-residue protein sequence, read N- to C-terminus: Transcription factor 15 (199 aa).

Residues 25 to 67 (EENRSESDASDQSFGCCEGPEAARRGPGPGGGRRAGGGGGAGP) are disordered. Positions 51 to 66 (PGPGGGRRAGGGGGAG) are enriched in gly residues. The bHLH domain maps to 72-124 (RQRQAANARERDRTQSVNTAFTALRTLIPTEPVDRKLSKIETVRLASSYIAHL).

As to quaternary structure, heterodimer; efficient DNA binding requires dimerization with another bHLH protein, such as TCF3/E12. Interacts with MEOX2.

It is found in the nucleus. Early transcription factor that plays a key role in somitogenesis, paraxial mesoderm development and regulation of stem cell pluripotency. Essential for the mesenchymal to epithelial transition associated with somite formation. Required for somite morphogenesis, thereby regulating patterning of the axial skeleton and skeletal muscles. Required for proper localization of somite epithelium markers during the mesenchymal to epithelial transition. Also plays a key role in regulation of stem cell pluripotency. Promotes pluripotency exit of embryonic stem cells (ESCs) by priming ESCs for differentiation. Acts as a key regulator of self-renewal of hematopoietic stem cells (HSCs) by mediating HSCs quiescence and long-term self-renewal. Together with MEOX2, regulates transcription in heart endothelial cells to regulate fatty acid transport across heart endothelial cells. Acts by forming a heterodimer with another helix-loop-helix (bHLH) protein, such as TCF3/E12, that binds DNA on E-box motifs (5'-CANNTG-3') and activates transcription of target genes. This Homo sapiens (Human) protein is Transcription factor 15.